A 487-amino-acid polypeptide reads, in one-letter code: Probable glycine dehydrogenase (decarboxylating) subunit 2 (487 aa).

Lysine 269 is modified (N6-(pyridoxal phosphate)lysine).

The protein belongs to the GcvP family. C-terminal subunit subfamily. The glycine cleavage system is composed of four proteins: P, T, L and H. In this organism, the P 'protein' is a heterodimer of two subunits. The cofactor is pyridoxal 5'-phosphate.

It carries out the reaction N(6)-[(R)-lipoyl]-L-lysyl-[glycine-cleavage complex H protein] + glycine + H(+) = N(6)-[(R)-S(8)-aminomethyldihydrolipoyl]-L-lysyl-[glycine-cleavage complex H protein] + CO2. The glycine cleavage system catalyzes the degradation of glycine. The P protein binds the alpha-amino group of glycine through its pyridoxal phosphate cofactor; CO(2) is released and the remaining methylamine moiety is then transferred to the lipoamide cofactor of the H protein. The chain is Probable glycine dehydrogenase (decarboxylating) subunit 2 from Prosthecochloris aestuarii (strain DSM 271 / SK 413).